The sequence spans 201 residues: Potassium-transporting ATPase KdpC subunit (201 aa).

Residues 13 to 33 traverse the membrane as a helical segment; it reads IIFMIFTILCGGIYTIFITGI.

This sequence belongs to the KdpC family. The system is composed of three essential subunits: KdpA, KdpB and KdpC.

Its subcellular location is the cell membrane. Functionally, part of the high-affinity ATP-driven potassium transport (or Kdp) system, which catalyzes the hydrolysis of ATP coupled with the electrogenic transport of potassium into the cytoplasm. This subunit acts as a catalytic chaperone that increases the ATP-binding affinity of the ATP-hydrolyzing subunit KdpB by the formation of a transient KdpB/KdpC/ATP ternary complex. This is Potassium-transporting ATPase KdpC subunit from Clostridium botulinum (strain Eklund 17B / Type B).